The primary structure comprises 611 residues: Chaperone protein HtpG (611 aa).

The segment at 1–326 (MSETLERHAF…TEDLPLNVSR (326 aa)) is a; substrate-binding. Residues 327-536 (EMLQATPVLA…SGGPDLQMQR (210 aa)) form a b region. The segment at 537-611 (LLRRAGRGFG…RVATALAAQG (75 aa)) is c.

Belongs to the heat shock protein 90 family. Homodimer.

The protein localises to the cytoplasm. In terms of biological role, molecular chaperone. Has ATPase activity. This is Chaperone protein HtpG from Methylobacterium nodulans (strain LMG 21967 / CNCM I-2342 / ORS 2060).